The primary structure comprises 475 residues: Aspartyl/glutamyl-tRNA(Asn/Gln) amidotransferase subunit B (475 aa).

The protein belongs to the GatB/GatE family. GatB subfamily. As to quaternary structure, heterotrimer of A, B and C subunits.

It carries out the reaction L-glutamyl-tRNA(Gln) + L-glutamine + ATP + H2O = L-glutaminyl-tRNA(Gln) + L-glutamate + ADP + phosphate + H(+). It catalyses the reaction L-aspartyl-tRNA(Asn) + L-glutamine + ATP + H2O = L-asparaginyl-tRNA(Asn) + L-glutamate + ADP + phosphate + 2 H(+). Its function is as follows. Allows the formation of correctly charged Asn-tRNA(Asn) or Gln-tRNA(Gln) through the transamidation of misacylated Asp-tRNA(Asn) or Glu-tRNA(Gln) in organisms which lack either or both of asparaginyl-tRNA or glutaminyl-tRNA synthetases. The reaction takes place in the presence of glutamine and ATP through an activated phospho-Asp-tRNA(Asn) or phospho-Glu-tRNA(Gln). This Staphylococcus aureus (strain COL) protein is Aspartyl/glutamyl-tRNA(Asn/Gln) amidotransferase subunit B.